Here is a 423-residue protein sequence, read N- to C-terminus: Glucose-1-phosphate adenylyltransferase (423 aa).

Residues Tyr107, Gly172, 187–188 (EK), and Ser205 each bind alpha-D-glucose 1-phosphate.

Belongs to the bacterial/plant glucose-1-phosphate adenylyltransferase family. As to quaternary structure, homotetramer.

The enzyme catalyses alpha-D-glucose 1-phosphate + ATP + H(+) = ADP-alpha-D-glucose + diphosphate. It functions in the pathway glycan biosynthesis; glycogen biosynthesis. Involved in the biosynthesis of ADP-glucose, a building block required for the elongation reactions to produce glycogen. Catalyzes the reaction between ATP and alpha-D-glucose 1-phosphate (G1P) to produce pyrophosphate and ADP-Glc. The polypeptide is Glucose-1-phosphate adenylyltransferase (Albidiferax ferrireducens (strain ATCC BAA-621 / DSM 15236 / T118) (Rhodoferax ferrireducens)).